The following is a 606-amino-acid chain: MARSEARRQAREKRPRAVPEERALRERRQPRPRREPLESGAGDHRRPPQASAGAAGHASFMRRLVDQEDAGGQSQEPEVLGRTGNLPRKPASRNSPEAPPLDGTLGCWATGAGAAGGFGGAQNRACVAPTSCPGNLPARPLPFLPPLLASRNPCPWHYVHLSGSHDTLVPTCFEAKLHQKGSGPTPSATSTLAERASPAMATYTYTSRPRALPCQRRRYRDDLMQQPEEPVHYGNIMYDRRVIRGNTYALQSVPLPGQPDPVEIQRQQQARRRAFARKQAQEQLRPRTPEPVEGRKHVDVQTELYLEEIADRIVEVDMECQTDAFLDKPPTPLFIPAKTGKDVATEILEGELFDFDLEVKPMLEVLVGKTIEQSLLEVMEEEELANLRASQYAYEELRNIELAEVQRLEEQERRHREEKERRKQQQWQVVHKHNETSQKIAARAFAQRYLADLLPSVFDSLRDGGYFYDPVERDIEIGFLPWLMNEVDKTMESSMVGRTVLDMLIREVVERRLNLYEQKEGRHASVRPENGLGGPGGTREPLVGFESQDQGASQAQRPLPDRDSLQRTPYDARYAERVSSQERRLAEENDELTEMRKSSKREELSQ.

The segment at 1–103 (MARSEARRQA…NSPEAPPLDG (103 aa)) is disordered. The span at 15–46 (PRAVPEERALRERRQPRPRREPLESGAGDHRR) shows a compositional bias: basic and acidic residues. Position 331 is a phosphothreonine; by MAPK1 (T331). Residues 393-429 (AYEELRNIELAEVQRLEEQERRHREEKERRKQQQWQV) are a coiled coil. Positions 520–606 (EGRHASVRPE…KSSKREELSQ (87 aa)) are disordered. A compositionally biased stretch (polar residues) spans 547-556 (SQDQGASQAQ). The stretch at 572–604 (ARYAERVSSQERRLAEENDELTEMRKSSKREEL) forms a coiled coil. Residues 573–606 (RYAERVSSQERRLAEENDELTEMRKSSKREELSQ) show a composition bias toward basic and acidic residues.

Belongs to the flagellar radial spoke RSP3 family. As to quaternary structure, component of the axonemal radial spoke 1 (RS1) and 2 (RS2) complexes, at least composed of spoke head proteins RSPH1, RSPH3, RSPH9 and the cilia-specific component RSPH4A or sperm-specific component RSPH6A, spoke stalk proteins RSPH14, DNAJB13, DYDC1, ROPN1L and NME5, and the RS1 complex-specific anchor protein IQUB. Interacts with IQUB. Interacts with phosphorylated MAPK1. Interacts with MEK1. Interacts with PKA regulatory subunits PRKAR1A and PRKAR1B. Interacts with RSPH1. Interacts with RSPH4A. Interacts with RSPH6A. Interacts with RSPH9. Interacts with LRRC23.

The protein localises to the cytoplasm. It localises to the cytoskeleton. It is found in the cilium axoneme. Its subcellular location is the flagellum axoneme. Functions as part of axonemal radial spoke complexes that play an important part in the motility of sperm and cilia. Functions as a protein kinase A-anchoring protein that scaffolds the cAMP-dependent protein kinase holoenzyme. May serve as a point of convergence for MAPK and PKA signaling in cilia. In Bos taurus (Bovine), this protein is Radial spoke head protein 3 homolog (RSPH3).